We begin with the raw amino-acid sequence, 103 residues long: uncharacterized protein (103 aa).

This is an uncharacterized protein from Acanthamoeba polyphaga mimivirus (APMV).